A 168-amino-acid chain; its full sequence is Small ribosomal subunit protein uS5 (168 aa).

The 64-residue stretch at phenylalanine 14–valine 77 folds into the S5 DRBM domain.

Belongs to the universal ribosomal protein uS5 family. As to quaternary structure, part of the 30S ribosomal subunit. Contacts proteins S4 and S8.

With S4 and S12 plays an important role in translational accuracy. Functionally, located at the back of the 30S subunit body where it stabilizes the conformation of the head with respect to the body. In Lactococcus lactis subsp. cremoris (strain MG1363), this protein is Small ribosomal subunit protein uS5.